Here is a 570-residue protein sequence, read N- to C-terminus: Sulfite reductase [NADPH] hemoprotein beta-component (570 aa).

The [4Fe-4S] cluster site is built by cysteine 434, cysteine 440, cysteine 479, and cysteine 483. Position 483 (cysteine 483) interacts with siroheme.

The protein belongs to the nitrite and sulfite reductase 4Fe-4S domain family. In terms of assembly, alpha(8)-beta(8). The alpha component is a flavoprotein, the beta component is a hemoprotein. Siroheme is required as a cofactor. Requires [4Fe-4S] cluster as cofactor.

It carries out the reaction hydrogen sulfide + 3 NADP(+) + 3 H2O = sulfite + 3 NADPH + 4 H(+). It functions in the pathway sulfur metabolism; hydrogen sulfide biosynthesis; hydrogen sulfide from sulfite (NADPH route): step 1/1. In terms of biological role, component of the sulfite reductase complex that catalyzes the 6-electron reduction of sulfite to sulfide. This is one of several activities required for the biosynthesis of L-cysteine from sulfate. The chain is Sulfite reductase [NADPH] hemoprotein beta-component from Cronobacter sakazakii (strain ATCC BAA-894) (Enterobacter sakazakii).